The sequence spans 117 residues: Putative cysteine proteinase inhibitor 7 (117 aa).

A signal peptide spans 1 to 24; it reads MTMRTSSLLLAAVAVVAIVAGATA. Residues 28 to 84 enclose the Cystatin domain; that stretch reads GSWEPVDINDPHVQELGRWAVAEEDRGVAAGGLTFERVTDGEKQVVAGVNYRLTLEA. A Secondary area of contact motif is present at residues 71–75; that stretch reads QVVAG.

The protein belongs to the cystatin family. Phytocystatin subfamily.

The protein localises to the secreted. Specific inhibitor of cysteine proteinases. Probably involved in the regulation of endogenous processes and in defense against pests and pathogens. The protein is Putative cysteine proteinase inhibitor 7 of Oryza sativa subsp. japonica (Rice).